The sequence spans 165 residues: Chaperone protein SicA (165 aa).

The protein belongs to the LcrH/SycD chaperone family. In terms of assembly, dimer or higher-order oligomers.

It is found in the cytoplasm. Functionally, type III secretion-associated chaperone required for SipB and SipC stabilization. Prevents premature association of SipB with SipC, which may lead to their targeting for degradation. Along with InvF, required for transcription activation of sigDE (sopB pipC), sicAsipBCDA, and sopE. In Salmonella dublin, this protein is Chaperone protein SicA (sicA).